A 533-amino-acid polypeptide reads, in one-letter code: Homeobox protein DTH-1 (533 aa).

2 disordered regions span residues 1-28 and 308-378; these read MSSNGDSVKYDTNFDREGYSTDSSNECP and LPQN…GKKR. Over residues 8-19 the composition is skewed to basic and acidic residues; that stretch reads VKYDTNFDREGY. Low complexity predominate over residues 308–317; sequence LPQNLPNPNQ. Residues 318–333 are compositionally biased toward polar residues; that stretch reads TDSIYSSSINENNQPI. The segment covering 360–371 has biased composition (low complexity); it reads SVENNDNENSSS. Positions 377–436 form a DNA-binding region, homeobox; the sequence is KRKRRVLFSKKQILELERHFRQKKYLSAPEREHLANLIGLSPTQVKIWFQNHRYKMKRAH.

It belongs to the NK-2 homeobox family. As to expression, intestine and unidentified peripheral parenchymal cells. Slightly higher levels in the cephalic region compared to other body regions.

It is found in the nucleus. Functionally, this protein might be involved in determination and/or differentiation of nerve cells in the continuous replacement of neurons in the cephalic region. The chain is Homeobox protein DTH-1 (DTH-1) from Girardia tigrina (Planarian).